A 321-amino-acid polypeptide reads, in one-letter code: Probable arabinan endo-1,5-alpha-L-arabinosidase A (321 aa).

Residues 1–19 (MSASVFVVVASCLAALAHG) form the signal peptide. The active-site Proton acceptor is Asp34. Residue Glu200 is the Proton donor of the active site.

This sequence belongs to the glycosyl hydrolase 43 family.

It is found in the secreted. The enzyme catalyses Endohydrolysis of (1-&gt;5)-alpha-arabinofuranosidic linkages in (1-&gt;5)-arabinans.. The protein operates within glycan metabolism; L-arabinan degradation. In terms of biological role, endo-1,5-alpha-L-arabinanase involved in degradation of pectin. Its preferred substrate is linear 1,5-alpha-L-arabinan. In Aspergillus fumigatus (strain ATCC MYA-4609 / CBS 101355 / FGSC A1100 / Af293) (Neosartorya fumigata), this protein is Probable arabinan endo-1,5-alpha-L-arabinosidase A (abnA).